A 430-amino-acid chain; its full sequence is Ethylene-responsive transcription factor WRI1 (430 aa).

Residues 1–26 (MKKRLTTSTCSSSPSSSVSSSTTTSS) show a composition bias toward low complexity. Residues 1–66 (MKKRLTTSTC…PASTRRSSIY (66 aa)) form a disordered region. Positions 53 to 63 (NPTSPASTRRS) are enriched in polar residues. A DNA-binding region (AP2/ERF 1) is located at residues 65–131 (IYRGVTRHRW…WGPDTILNFP (67 aa)). The residue at position 70 (threonine 70) is a Phosphothreonine; by KIN10. Serine 166 bears the Phosphoserine; by KIN10 mark. The segment at residues 167–225 (KYRGVARHHHNGRWEARIGRVFGNKYLYLGTYNTQEEAAAAYDMAAIEYRGANAVTNFD) is a DNA-binding region (AP2/ERF 2). Basic and acidic residues predominate over residues 260-274 (VETREAKEEPREEVK). 2 disordered regions span residues 260 to 297 (VETR…EQQE) and 398 to 422 (SPPS…TTTT).

This sequence belongs to the AP2/ERF transcription factor family. AP2 subfamily. As to quaternary structure, interacts with KIN10 and KIN11. In terms of processing, ubiquitinated. The phosphorylation at Thr-70 and Ser-166 by KIN10 facilitates its degradation via the proteasomal pathway. Mostly expressed in siliques, especially in seeds. Also detected in roots and flowers, and, to a lower extent, in leaves stems and seedlings.

The protein localises to the nucleus. Down-regulated by KIN10 that controls its protein stability under a phosphorylation-dependent manner. In terms of biological role, may be involved in the regulation of gene expression by stress factors and by components of stress signal transduction pathways. Transcriptional activator involved in the activation of a subset of sugar-responsive genes and the control of carbon flow from sucrose import to oil accumulation in developing seeds. Binds to the GCC-box pathogenesis-related promoter element. Promotes sugar uptake and seed oil accumulation by glycolysis. Required for embryo development, seed germination and, indirectly, for seedling establishment. Negative regulator of the ABA-mediated germination inhibition. In Arabidopsis thaliana (Mouse-ear cress), this protein is Ethylene-responsive transcription factor WRI1 (WRI1).